The chain runs to 976 residues: Protein phosphatase 1 regulatory subunit 12B (976 aa).

A compositionally biased stretch (basic and acidic residues) spans 1 to 24 (MAELEHLGGKRAESARARRAEQLR). The interval 1 to 52 (MAELEHLGGKRAESARARRAEQLRRWRGSLTEQEPAERQGAGRQLQTRRGSP) is disordered. At Ser29 the chain carries Phosphoserine. ANK repeat units lie at residues 57 to 86 (EDGAVFLAACSSGDTDEVKKLLARGADINT), 90 to 119 (DGLTALHQACIDENLDMVKFLVENRANVNQ), 123 to 152 (EGWTPLHAAASCGYLNIAEYFISHGASVGI), 216 to 245 (SGATALHVAAAKGYSEVLRLLIQAGYELNV), and 249 to 278 (DGWTPLHAAAHWGVKEACSILAEALCDMDI). The segment at 342–489 (EEIPKSQDTE…LDDKDKEREN (148 aa)) is disordered. Residues 362 to 374 (SEEEEGEDEVSES) are compositionally biased toward acidic residues. Over residues 375–385 (ETEKEADKKPE) the composition is skewed to basic and acidic residues. The segment covering 411-423 (FSASSARRLSSLF) has biased composition (low complexity). Thr444 carries the phosphothreonine modification. The span at 465–477 (SSIYRSSSSPRIS) shows a compositional bias: low complexity. The span at 480–489 (LDDKDKEREN) shows a compositional bias: basic and acidic residues. Ser502 is subject to Phosphoserine. Residues 503–873 (STSDIEEKEN…LTSRVEEDSN (371 aa)) are disordered. Residues 538–564 (ETPQTIAPSTYTSTYLKRTPYKSQADS) show a composition bias toward polar residues. Over residues 622-631 (VRDEEAESLR) the composition is skewed to basic and acidic residues. Residues 632-642 (KARSRQARQTR) are compositionally biased toward basic residues. Thr645 is modified (phosphothreonine). Basic and acidic residues predominate over residues 655-679 (EAEKTFSRSRAERQAQEQPGEKLED). Polar residues-rich tracts occupy residues 722-739 (DKPTTPVSPSASRPSLYT) and 747-763 (SRASGPDSENSETSTHA). Residues 765-777 (AAKEMDTSEKGEA) are compositionally biased toward basic and acidic residues. A compositionally biased stretch (basic residues) spans 791 to 801 (ERRRAKDRRRG). The residue at position 802 (Thr802) is a Phosphothreonine. A compositionally biased stretch (basic and acidic residues) spans 818-830 (EEVKEALHERLSR). Residue Ser833 is modified to Phosphoserine. Residues 844–860 (YSDRASARARREAREAR) are compositionally biased toward basic and acidic residues. Ser941 is subject to Phosphoserine.

PP1 comprises a catalytic subunit, PPP1CA, PPP1CB or PPP1CC, and one or several targeting or regulatory subunits. PPP1R12B mediates binding to myosin. Isoform 3 and isoform 4 bind PPP1R12A, but not isoform 1 of PPP1R12B itself. Binds IL16.

It localises to the cytoplasm. The protein resides in the cytoskeleton. Its subcellular location is the stress fiber. Regulates myosin phosphatase activity. Augments Ca(2+) sensitivity of the contractile apparatus. The polypeptide is Protein phosphatase 1 regulatory subunit 12B (Ppp1r12b) (Mus musculus (Mouse)).